Consider the following 1193-residue polypeptide: DNA-directed RNA polymerase subunit beta (1193 aa).

Residues 1152 to 1161 (IEMRDLEDDE) are compositionally biased toward acidic residues. Residues 1152-1193 (IEMRDLEDDEETKKADGLALSNDEDAADLAPVDLERDAVTKE) are disordered. The span at 1184–1193 (DLERDAVTKE) shows a compositional bias: basic and acidic residues.

The protein belongs to the RNA polymerase beta chain family. The RNAP catalytic core consists of 2 alpha, 1 beta, 1 beta' and 1 omega subunit. When a sigma factor is associated with the core the holoenzyme is formed, which can initiate transcription.

The catalysed reaction is RNA(n) + a ribonucleoside 5'-triphosphate = RNA(n+1) + diphosphate. Functionally, DNA-dependent RNA polymerase catalyzes the transcription of DNA into RNA using the four ribonucleoside triphosphates as substrates. The protein is DNA-directed RNA polymerase subunit beta of Bacillus pumilus (strain SAFR-032).